Consider the following 553-residue polypeptide: Glutamine--tRNA ligase (553 aa).

The short motif at 34–44 is the 'HIGH' region element; it reads PEPNGYLHIGH. ATP-binding positions include 35 to 37 and 41 to 47; these read EPN and HIGHAKS. 2 residues coordinate L-glutamine: D68 and Y213. ATP contacts are provided by residues T232 and 262–263; that span reads RL. Positions 269–273 match the 'KMSKS' region motif; that stretch reads LTSKR.

This sequence belongs to the class-I aminoacyl-tRNA synthetase family. As to quaternary structure, monomer.

It is found in the cytoplasm. The catalysed reaction is tRNA(Gln) + L-glutamine + ATP = L-glutaminyl-tRNA(Gln) + AMP + diphosphate. This Psychromonas ingrahamii (strain DSM 17664 / CCUG 51855 / 37) protein is Glutamine--tRNA ligase.